The primary structure comprises 383 residues: MRMMVAGGGTGGHVFPGIALAEEVVTRHPANDVVFVGTARGLEASVVPAAGFPIELIEVKGLKGKGLVGALLNLLLLPRAFLQSWRILRRWRPDVVVGVGGYASGPVVLTAWAMRIPTAVQEQNAIAGLTNRLLGRVVKAAFTAFPEAARHFAPRKVYQLGNPIRRRLMENYMRPESAHGAPRLLVFGGSQGAHALNMRVIEALPHLADLRERIQITHQTGARDREYVEKGYRACGFTPDVREFIDDMSAAYAGCDLVVCRAGATTLAELTVCKKPSILVPFPAAADNHQVKNARSLVDAGAAVMIEERDLTGEVLAREIRDILDAPERRERMARAAGRLGSPQAAKEIADVCMELVRRRWGSPFGQAREPGQKPARPPDLAS.

Residues 10-12 (TGG), Asn-124, Arg-165, Ser-190, Ile-245, and Gln-290 contribute to the UDP-N-acetyl-alpha-D-glucosamine site. Residues 364-383 (PFGQAREPGQKPARPPDLAS) form a disordered region.

It belongs to the glycosyltransferase 28 family. MurG subfamily.

The protein localises to the cell inner membrane. The catalysed reaction is di-trans,octa-cis-undecaprenyl diphospho-N-acetyl-alpha-D-muramoyl-L-alanyl-D-glutamyl-meso-2,6-diaminopimeloyl-D-alanyl-D-alanine + UDP-N-acetyl-alpha-D-glucosamine = di-trans,octa-cis-undecaprenyl diphospho-[N-acetyl-alpha-D-glucosaminyl-(1-&gt;4)]-N-acetyl-alpha-D-muramoyl-L-alanyl-D-glutamyl-meso-2,6-diaminopimeloyl-D-alanyl-D-alanine + UDP + H(+). It functions in the pathway cell wall biogenesis; peptidoglycan biosynthesis. Functionally, cell wall formation. Catalyzes the transfer of a GlcNAc subunit on undecaprenyl-pyrophosphoryl-MurNAc-pentapeptide (lipid intermediate I) to form undecaprenyl-pyrophosphoryl-MurNAc-(pentapeptide)GlcNAc (lipid intermediate II). In Anaeromyxobacter dehalogenans (strain 2CP-C), this protein is UDP-N-acetylglucosamine--N-acetylmuramyl-(pentapeptide) pyrophosphoryl-undecaprenol N-acetylglucosamine transferase.